Here is a 142-residue protein sequence, read N- to C-terminus: Transcription antitermination protein NusB (142 aa).

This sequence belongs to the NusB family.

Involved in transcription antitermination. Required for transcription of ribosomal RNA (rRNA) genes. Binds specifically to the boxA antiterminator sequence of the ribosomal RNA (rrn) operons. In Buchnera aphidicola subsp. Cinara cedri (strain Cc), this protein is Transcription antitermination protein NusB.